Here is a 359-residue protein sequence, read N- to C-terminus: MDSTNQNLTQTEDEAFLFAMQLASASVLPMVLKSALELDLLEIMAKAGPGAAISPSELAAQLPTKNPEAPVMLDRMLRLLATYSVLNCTLRTLPDGRVERLYSLAPVCKLLTKNADGVSVAPLLLMNQDKVLMESWYHLTDAVLDGGVPFNKAYGMTAFEYHGTDPRFNKVFNRGMSDHSTMTMKKILEDYKGFEGLNSIVDVGGGTGATVNMIVSKYPSIKGINFDLSHVIEDAPAYPGVEHVGRDMFVSVPKADAIFMKWICHDWSDEHCLKFLKNCYEALPANGKVLVAECILPETPDTSAATKNAVHVDIVMLAHNPGGKERTEKEFEALAKGAGFTGFRRACCAYQTWVMEFHK.

Residue 126–132 (MNQDKVL) participates in substrate binding. The substrate binding stretch occupies residues 158-176 (AFEYHGTDPRFNKVFNRGM). S-adenosyl-L-methionine contacts are provided by G204, D227, D247, M248, and K261. The Proton acceptor role is filled by H265.

The protein belongs to the class I-like SAM-binding methyltransferase superfamily. Cation-independent O-methyltransferase family. COMT subfamily. Homodimer. Fruit. Not expressed in leaf.

The catalysed reaction is (E)-caffeate + S-adenosyl-L-methionine = (E)-ferulate + S-adenosyl-L-homocysteine + H(+). The protein operates within aromatic compound metabolism; phenylpropanoid biosynthesis. Catalyzes the conversion of caffeic acid to ferulic acid and of 5-hydroxyferulic acid to sinapic acid. The resulting products may subsequently be converted to the corresponding alcohols that are incorporated into lignins. In Capsicum annuum (Capsicum pepper), this protein is Caffeic acid 3-O-methyltransferase (COMT).